A 737-amino-acid chain; its full sequence is Pentatricopeptide repeat-containing protein At3g49740 (737 aa).

PPR repeat units follow at residues 20–55 (TLLNLNRRLTGLTRSGENRNALKLFADVHRCTTLRP), 56–90 (DQYSVSLAITTARHLRDTIFGGQVHCYAIRSGLLC), 91–121 (HSHVSNTLLSLYERLGNLASLKKKFDEIDEP), 122–152 (DVYSWTTLLSASFKLGDIEYAFEVFDKMPER), 154–188 (DVAIWNAMITGCKESGYHETSVELFREMHKLGVRH), 189–222 (DKFGFATILSMCDYGSLDFGKQVHSLVIKAGFFI), 223–253 (ASSVVNALITMYFNCQVVVDACLVFEETDVA), 256–289 (DQVTFNVVIDGLAGFKRDESLLVFRKMLEASLRP), 290–321 (TDLTFVSVMGSCSCAAMGHQVHGLAIKTGYEK), 322–352 (YTLVSNATMTMYSSFEDFGAAHKVFESLEEK), 353–387 (DLVTWNTMISSYNQAKLGKSAMSVYKRMHIIGVKP), 388–418 (DEFTFGSLLATSLDLDVLEMVQACIIKFGLS), 420–454 (KIEISNALISAYSKNGQIEKADLLFERSLRKNLIS), 455–485 (WNAIISGFYHNGFPFEGLERFSCLLESEVRI), 488–522 (DAYTLSTLLSICVSTSSLMLGSQTHAYVLRHGQFK), 523–553 (ETLIGNALINMYSQCGTIQNSLEVFNQMSEK), 554–588 (DVVSWNSLISAYSRHGEGENAVNTYKTMQDEGKVI), 590–620 (DAATFSAVLSACSHAGLVEEGLEIFNSMVEF), and 626–656 (NVDHFSCLVDLLGRAGHLDEAESLVKISEKT). Positions 663 to 737 (VWWALFSACA…KQRGCSWMRL (75 aa)) are type E motif; degenerate.

It belongs to the PPR family. PCMP-E subfamily.

This Arabidopsis thaliana (Mouse-ear cress) protein is Pentatricopeptide repeat-containing protein At3g49740 (PCMP-E84).